The primary structure comprises 446 residues: Tektin-4 (446 aa).

3 coiled-coil regions span residues 182–215, 297–346, and 378–422; these read IRNV…MDYS, DAIA…NDKS, and SEVG…ANSI.

It belongs to the tektin family.

The protein localises to the cytoplasm. It localises to the cytoskeleton. It is found in the cilium axoneme. Its subcellular location is the cell projection. The protein resides in the cilium. The protein localises to the flagellum. In terms of biological role, microtubule inner protein (MIP) part of the dynein-decorated doublet microtubules (DMTs) in cilia and flagellar axoneme. Forms filamentous polymers in the walls of ciliary and flagellar microtubules. Contributes to normal sperm motility. The chain is Tektin-4 (tekt4) from Xenopus laevis (African clawed frog).